The primary structure comprises 584 residues: MTAPNRNTLWARAIADELAAAGVHAVCVCPGSRSTPLTVAVDAHDDLTVYSHLDERSAAFFALGRGKRTGAPTAVLTTSGTATANLHPAVMEAAQARIPLVVLTADRPPELRGSGANQTVDQEQLYGSAVRYYEDLPEPEVTARKLRSLRTSVCRAVGHTTGPKPGPVHLNVPFRKPLEPVSVPGDVPPSFDDDHPLAAAGRGGDTPFVSVHDGTTEPAGETAAALAAAATTAARPLVVAGPADGGAGITPDAAAALADATGAPIFADPLSGLRFGPHVGDAPVVGGYDGFLAADVPHPEFVLRFGASPTSKPLRKWLAASDARQVVVDPAGGWREAEFTATDVVAADPAATARAIAARADGTRSAWTDAVLDLEARYWAAVDDFQPAATLEGEIAATVAAGAPDPATVFVSNSMPIRDFDRFAAPRGADLAVLGNRGASGIDGVVSSALGAGSATADPVVGLVGDLAYFHDSNGLLALERCGVDATIVLVNNDGGSIFHMLPIEQFDPPFTGQFKTPHGLDFAPTADTYALSFARTDTVGEFRAAYRAALGDAGTHVIEVSTDAEASHRERERLADRVTGLSV.

A disordered region spans residues 563–584 (TDAEASHRERERLADRVTGLSV). Residues 566-577 (EASHRERERLAD) are compositionally biased toward basic and acidic residues.

This sequence belongs to the TPP enzyme family. MenD subfamily. As to quaternary structure, homodimer. It depends on Mg(2+) as a cofactor. The cofactor is Mn(2+). Thiamine diphosphate is required as a cofactor.

The catalysed reaction is isochorismate + 2-oxoglutarate + H(+) = 5-enolpyruvoyl-6-hydroxy-2-succinyl-cyclohex-3-ene-1-carboxylate + CO2. It functions in the pathway quinol/quinone metabolism; 1,4-dihydroxy-2-naphthoate biosynthesis; 1,4-dihydroxy-2-naphthoate from chorismate: step 2/7. The protein operates within quinol/quinone metabolism; menaquinone biosynthesis. In terms of biological role, catalyzes the thiamine diphosphate-dependent decarboxylation of 2-oxoglutarate and the subsequent addition of the resulting succinic semialdehyde-thiamine pyrophosphate anion to isochorismate to yield 2-succinyl-5-enolpyruvyl-6-hydroxy-3-cyclohexene-1-carboxylate (SEPHCHC). This Halobacterium salinarum (strain ATCC 29341 / DSM 671 / R1) protein is 2-succinyl-5-enolpyruvyl-6-hydroxy-3-cyclohexene-1-carboxylate synthase.